The chain runs to 344 residues: Endo-1,4-beta-xylanase UM03411 (344 aa).

Positions 1 to 21 (MKTNFLVLLSALLAASSAVTA) are cleaved as a signal peptide. The 304-residue stretch at 35–338 (QRAGSSLNAA…KPAYNAVLST (304 aa)) folds into the GH10 domain. The active-site Proton donor is the E166. An N-linked (GlcNAc...) asparagine glycan is attached at N171. Residue E275 is the Nucleophile of the active site. C293 and C299 form a disulfide bridge. N-linked (GlcNAc...) asparagine glycosylation is found at N310 and N323.

Belongs to the glycosyl hydrolase 10 (cellulase F) family.

The protein resides in the secreted. It carries out the reaction Endohydrolysis of (1-&gt;4)-beta-D-xylosidic linkages in xylans.. Its pathway is glycan degradation; xylan degradation. Endo-1,4-beta-xylanase involved in the hydrolysis of xylan, a major structural heterogeneous polysaccharide found in plant biomass representing the second most abundant polysaccharide in the biosphere, after cellulose. This chain is Endo-1,4-beta-xylanase UM03411, found in Mycosarcoma maydis (Corn smut fungus).